Here is a 158-residue protein sequence, read N- to C-terminus: NAD(P)H-quinone oxidoreductase subunit J, chloroplastic (158 aa).

It belongs to the complex I 30 kDa subunit family. As to quaternary structure, NDH is composed of at least 16 different subunits, 5 of which are encoded in the nucleus.

The protein localises to the plastid. It is found in the chloroplast thylakoid membrane. The catalysed reaction is a plastoquinone + NADH + (n+1) H(+)(in) = a plastoquinol + NAD(+) + n H(+)(out). The enzyme catalyses a plastoquinone + NADPH + (n+1) H(+)(in) = a plastoquinol + NADP(+) + n H(+)(out). Functionally, NDH shuttles electrons from NAD(P)H:plastoquinone, via FMN and iron-sulfur (Fe-S) centers, to quinones in the photosynthetic chain and possibly in a chloroplast respiratory chain. The immediate electron acceptor for the enzyme in this species is believed to be plastoquinone. Couples the redox reaction to proton translocation, and thus conserves the redox energy in a proton gradient. This chain is NAD(P)H-quinone oxidoreductase subunit J, chloroplastic, found in Draba nemorosa (Woodland whitlowgrass).